Reading from the N-terminus, the 320-residue chain is GMP reductase (320 aa).

Catalysis depends on C174, which acts as the Thioimidate intermediate. Residue 203–226 (IIADGGLRVNGDIAKSIRFGATMC) participates in NADP(+) binding.

The protein belongs to the IMPDH/GMPR family. GuaC type 2 subfamily.

The catalysed reaction is IMP + NH4(+) + NADP(+) = GMP + NADPH + 2 H(+). Its function is as follows. Catalyzes the irreversible NADPH-dependent deamination of GMP to IMP. It functions in the conversion of nucleobase, nucleoside and nucleotide derivatives of G to A nucleotides, and in maintaining the intracellular balance of A and G nucleotides. The protein is GMP reductase of Mesoplasma florum (strain ATCC 33453 / NBRC 100688 / NCTC 11704 / L1) (Acholeplasma florum).